The primary structure comprises 1099 residues: Solute carrier family 12 member 1 (1099 aa).

The Cytoplasmic portion of the chain corresponds to 1 to 177; it reads MSLNNSSNVF…EDDQAGVVKF (177 aa). An RFXV motif motif is present at residues 20–23; it reads RFQV. Residues 31–53 are disordered; it reads ESSAAADDNTDPPHYEETSFGDE. Ser-61 is modified (phosphoserine). Ser-91 is modified (phosphoserine; by OXSR1 and STK39). Residue Thr-95 is modified to Phosphothreonine. Thr-100 and Thr-105 each carry phosphothreonine; by OXSR1 and STK39. Thr-118 is modified (phosphothreonine). A Phosphoserine modification is found at Ser-120. A Phosphoserine; by AMPK modification is found at Ser-130. Ser-148 carries the post-translational modification Phosphoserine. A helical transmembrane segment spans residues 178-198; that stretch reads GWVKGVLVRCMLNIWGVMLFI. The Extracellular portion of the chain corresponds to 199 to 201; the sequence is RLS. The chain crosses the membrane as a helical span at residues 202–222; that stretch reads WIVGEAGIGLGVLIILLSTMV. Residues 223–259 lie on the Cytoplasmic side of the membrane; the sequence is TSITGLSTSAIATNGFVRGGGAYYLISRSLGPEFGGS. The helical transmembrane segment at 260–280 threads the bilayer; it reads IGLIFAFANAVAVAMYVVGFA. At 281-302 the chain is on the extracellular side; sequence ETVVDLLKESDSMMVDPTNDIR. Residues 303 to 323 traverse the membrane as a helical segment; the sequence is IIGSITVVILLGISVAGMEWE. The Cytoplasmic portion of the chain corresponds to 324–327; that stretch reads AKAQ. A helical transmembrane segment spans residues 328 to 348; the sequence is VILLVILLIAIANFFIGTVIP. Topologically, residues 349 to 379 are extracellular; it reads SNNEKKSRGFFNYQASIFAENFGPRFTKGEG. The helical transmembrane segment at 380 to 400 threads the bilayer; that stretch reads FFSVFAIFFPAATGILAGANI. Over 401-417 the chain is Cytoplasmic; sequence SGDLEDPQDAIPRGTML. Residues 418–438 form a helical membrane-spanning segment; that stretch reads AIFITTVAYLGVAICVGACVV. Topologically, residues 439 to 550 are extracellular; the sequence is RDATGNMNDT…NNEPLRGYIL (112 aa). Asn-446 and Asn-456 each carry an N-linked (GlcNAc...) asparagine glycan. 2 helical membrane-spanning segments follow: residues 551-571 and 572-592; these read TFLI…APII and SNFF…ASYA. The Extracellular portion of the chain corresponds to 593–609; that stretch reads KSPGWRPAYGIYNMWVS. A helical transmembrane segment spans residues 610-630; the sequence is LFGAVLCCAVMFVINWWAAVI. The Cytoplasmic portion of the chain corresponds to 631 to 1099; that stretch reads TYVIEFFLYV…NHKNVLTFYS (469 aa).

It belongs to the SLC12A transporter family. As to quaternary structure, when phosphorylated, interacts with PPP3CB. Post-translationally, phosphorylated at Ser-91, Thr-100 and Thr-105 by OXSR1/OSR1 and STK39/SPAK downstream of WNK kinases (WNK1, WNK2, WNK3 or WNK4), promoting its activity. Kidney; localizes to the thick ascending limbs (at protein level).

It localises to the apical cell membrane. It carries out the reaction K(+)(out) + 2 chloride(out) + Na(+)(out) = K(+)(in) + 2 chloride(in) + Na(+)(in). Activated following phosphorylation by OXSR1/OSR1 and STK39/SPAK downstream of WNK kinases (WNK1, WNK2, WNK3 or WNK4). Functionally, renal sodium, potassium and chloride ion cotransporter that mediates the transepithelial NaCl reabsorption in the thick ascending limb and plays an essential role in the urinary concentration and volume regulation. Electrically silent transporter system. The polypeptide is Solute carrier family 12 member 1 (SLC12A1) (Homo sapiens (Human)).